Consider the following 72-residue polypeptide: Crustacean hyperglycemic hormone (72 aa).

Position 1 is a pyrrolidone carboxylic acid (glutamine 1). Phenylalanine 3 bears the D-phenylalanine mark. Cystine bridges form between cysteine 7-cysteine 43, cysteine 23-cysteine 39, and cysteine 26-cysteine 52. Residue valine 72 is modified to Valine amide.

In terms of tissue distribution, produced by the medulla terminalis X-organ in the eyestalks and transported to the sinus gland where they are stored and released.

It localises to the secreted. Hormone found in the sinus gland of isopods and decapods which controls the blood sugar level. Has a secretagogue action over the amylase released from the midgut gland. May act as a stress hormone and may be involved in the control of molting and reproduction. The protein is Crustacean hyperglycemic hormone of Astacus astacus (Noble crayfish).